A 540-amino-acid chain; its full sequence is Peptide chain release factor 3 (540 aa).

In terms of domain architecture, tr-type G spans 14–283; it reads ELRRNFAIIS…YFLNYALKPG (270 aa). GTP is bound by residues 23–30, 91–95, and 145–148; these read SHPDAGKT, DTPGH, and NKLD.

Belongs to the TRAFAC class translation factor GTPase superfamily. Classic translation factor GTPase family. PrfC subfamily.

It localises to the cytoplasm. Functionally, increases the formation of ribosomal termination complexes and stimulates activities of RF-1 and RF-2. It binds guanine nucleotides and has strong preference for UGA stop codons. It may interact directly with the ribosome. The stimulation of RF-1 and RF-2 is significantly reduced by GTP and GDP, but not by GMP. This Trichormus variabilis (strain ATCC 29413 / PCC 7937) (Anabaena variabilis) protein is Peptide chain release factor 3.